The sequence spans 150 residues: uncharacterized protein (150 aa).

A signal peptide spans 1-23 (MYSILIACLVLLLCLIIYVGHRA).

The protein belongs to the asfivirus EP152R family.

It is found in the virion. This is an uncharacterized protein from African swine fever virus (isolate Tick/South Africa/Pretoriuskop Pr4/1996) (ASFV).